Here is a 228-residue protein sequence, read N- to C-terminus: Endolytic peptidoglycan transglycosylase RlpA (228 aa).

The N-terminal stretch at 1–23 is a signal peptide; the sequence is MIQRHKLIVLIFLLIFCLSGCNT.

This sequence belongs to the RlpA family.

In terms of biological role, lytic transglycosylase with a strong preference for naked glycan strands that lack stem peptides. This chain is Endolytic peptidoglycan transglycosylase RlpA, found in Rickettsia felis (strain ATCC VR-1525 / URRWXCal2) (Rickettsia azadi).